The following is a 1085-amino-acid chain: Ubiquitin carboxyl-terminal hydrolase 36 (1085 aa).

The span at 23-36 (GGNSSAAGSSADQA) shows a compositional bias: low complexity. 2 disordered regions span residues 23 to 47 (GGNSSAAGSSADQAKSGEESNGSLQ) and 104 to 149 (KVVG…PKPK). Residues 173–481 (TGMINVGNTC…NAYIMFYELD (309 aa)) form the USP domain. Cysteine 182 functions as the Nucleophile in the catalytic mechanism. The active-site Proton acceptor is histidine 440. Disordered stretches follow at residues 489-730 (AANR…NNSK), 745-888 (KSAD…ELLK), 963-1030 (EQRQ…FYNQ), and 1043-1085 (KFNR…QQQS). Over residues 503-518 (STTPVPATTVSSPSPT) the composition is skewed to low complexity. Phosphoserine occurs at positions 514 and 516. Residues 532-542 (GYSNGNAQKTA) are compositionally biased toward polar residues. Low complexity predominate over residues 588-609 (NGNKSSSTSSNNSSSSNHKSIN). The segment covering 642–651 (MTDDHTEKPK) has biased composition (basic and acidic residues). Threonine 660 and threonine 664 each carry phosphothreonine. Serine 674 and serine 676 each carry phosphoserine. The segment covering 705–730 (TNGHSKTNGSLTNGSASSSVHVNNSK) has biased composition (polar residues). Phosphoserine is present on serine 749. Residues 749 to 758 (SDDDDDEEES) are compositionally biased toward acidic residues. A compositionally biased stretch (low complexity) spans 768–778 (PQKQSQSQSKA). A compositionally biased stretch (pro residues) spans 779 to 788 (PPSPKTPPSP). Position 781 is a phosphoserine (serine 781). Phosphothreonine is present on threonine 784. The residue at position 787 (serine 787) is a Phosphoserine. Acidic residues predominate over residues 805–818 (EVDDIDDDDDEEEE). The span at 822–844 (KIQTPSKTHRNPFSSSKPSTDSP) shows a compositional bias: polar residues. Position 825 is a phosphothreonine (threonine 825). Serine 843 carries the phosphoserine modification. Threonine 846 carries the post-translational modification Phosphothreonine. A compositionally biased stretch (polar residues) spans 859 to 884 (PVKSHQQPRVGNGYQSEATSNGSTIN). Low complexity-rich tracts occupy residues 987-998 (SGSAKGNNASNS) and 1056-1066 (QQQRALQRHLA).

It belongs to the peptidase C19 family. Interacts with atms/PAF1, but not with CycT.

Its subcellular location is the nucleus. The protein localises to the nucleolus. The catalysed reaction is Thiol-dependent hydrolysis of ester, thioester, amide, peptide and isopeptide bonds formed by the C-terminal Gly of ubiquitin (a 76-residue protein attached to proteins as an intracellular targeting signal).. Its function is as follows. Required for maintaining multiple types of adult stem cells, including male and female germline, epithelial follicle cell and intestinal stem cells. May function as a transcriptional repressor by continually deubiquiting histone H2B at the promoters of genes critical for cellular differentiation, thereby preventing histone H3 'Lys-4' trimethylation (H3K4). Controls selective autophagy activation by ubiquitinated proteins. This chain is Ubiquitin carboxyl-terminal hydrolase 36 (Usp36), found in Drosophila erecta (Fruit fly).